A 445-amino-acid polypeptide reads, in one-letter code: Alkylglycerol monooxygenase (445 aa).

2 helical membrane-spanning segments follow: residues 43–63 (ATPF…ILKG) and 111–131 (WDSP…YYWF). The Fatty acid hydroxylase domain maps to 120 to 249 (AFLGVDFGYY…LIIWDKIFGT (130 aa)). Residues 132 to 136 (HRMAH) carry the Histidine box-1 motif. Residues 145-149 (HQTHH) carry the Histidine box-2 motif. A Histidine box-3 motif is present at residues 221 to 225 (HRVHH). 3 consecutive transmembrane segments (helical) span residues 334–354 (LLKI…EETF), 363–383 (VTLL…GFLL), and 413–433 (VPSL…FWGV).

The protein belongs to the sterol desaturase family. TMEM195 subfamily. It depends on Fe cation as a cofactor.

The protein resides in the endoplasmic reticulum membrane. The catalysed reaction is 1-O-(1,2-saturated-alkyl)-sn-glycerol + (6R)-L-erythro-5,6,7,8-tetrahydrobiopterin + O2 = a 1-(1-hydroxyalkyl)-sn-glycerol + (6R)-L-erythro-6,7-dihydrobiopterin + H2O. Glyceryl-ether monooxygenase that cleaves the O-alkyl bond of ether lipids. Ether lipids are essential components of brain membranes. The chain is Alkylglycerol monooxygenase (AGMO) from Homo sapiens (Human).